A 563-amino-acid chain; its full sequence is MNSDGPKSGKKRREIRAKLVKKLTSDEDGSGKLVKDNNKSLKRGREGKSDVDEPLIKKPASTTPLVTQIAKTSDSYLSKTRFDQFPLSPLTLKGIEDAGFKTMTVVQEATLPLILQGKDILAKAKTGTGKTVAFLLPSIEAVIKAPPASRDNRHPPIIVLVVCPTRELACQAAAEANILLKYHPSIGVQVVIGGTKLPTEQRRLQKSPCQILVATPGRLKDHIDNTSGFATRLMGVKVLVLDEADHLLDMGFRREIERIIAAVPKQRQTFLFSATVSDEVRQICHVALKRDHEFVNCVQEGAGETHQKVSQMYMIASLDRHFSLLYGLLKKHITDNVGYKVIIFCTTAMVTRLVADLLGKLSLNVREIHSRKPQSYRTRVSDEFRKSKSIILVTSDVSARGVDYPDVSLVVQMGLPSDREQYIHRLGRTGRKGKEGEGVLLLAPWEEYFLSSVKDLPITKSSLPPIDHEAVKKVQKGLIQVEMTNKEAAYQAWLGYYKSQKKIARDTTRLVELANEFSRSMGLSIPPAIPVNILGKMGLKNVPGIRVAPGFDKKPAKRNYRSR.

Residues 21 to 57 (KKLTSDEDGSGKLVKDNNKSLKRGREGKSDVDEPLIK) are disordered. The segment covering 23 to 56 (LTSDEDGSGKLVKDNNKSLKRGREGKSDVDEPLI) has biased composition (basic and acidic residues). Ser25 is subject to Phosphoserine. The short motif at 80 to 108 (TRFDQFPLSPLTLKGIEDAGFKTMTVVQE) is the Q motif element. One can recognise a Helicase ATP-binding domain in the interval 111–294 (LPLILQGKDI…HVALKRDHEF (184 aa)). Position 124–131 (124–131 (AKTGTGKT)) interacts with ATP. The DEAD box motif lies at 242-245 (DEAD). In terms of domain architecture, Helicase C-terminal spans 328–479 (LLKKHITDNV…AVKKVQKGLI (152 aa)).

This sequence belongs to the DEAD box helicase family.

It catalyses the reaction ATP + H2O = ADP + phosphate + H(+). In Arabidopsis thaliana (Mouse-ear cress), this protein is DEAD-box ATP-dependent RNA helicase 25 (RH25).